A 545-amino-acid polypeptide reads, in one-letter code: ATP synthase subunit alpha (545 aa).

173–180 (GDRQTGKT) contacts ATP.

Belongs to the ATPase alpha/beta chains family. F-type ATPases have 2 components, CF(1) - the catalytic core - and CF(0) - the membrane proton channel. CF(1) has five subunits: alpha(3), beta(3), gamma(1), delta(1), epsilon(1). CF(0) has three main subunits: a(1), b(2) and c(9-12). The alpha and beta chains form an alternating ring which encloses part of the gamma chain. CF(1) is attached to CF(0) by a central stalk formed by the gamma and epsilon chains, while a peripheral stalk is formed by the delta and b chains.

The protein localises to the cell membrane. The enzyme catalyses ATP + H2O + 4 H(+)(in) = ADP + phosphate + 5 H(+)(out). Its function is as follows. Produces ATP from ADP in the presence of a proton gradient across the membrane. The alpha chain is a regulatory subunit. The polypeptide is ATP synthase subunit alpha (Leifsonia xyli subsp. xyli (strain CTCB07)).